The chain runs to 610 residues: UvrABC system protein C (610 aa).

One can recognise a GIY-YIG domain in the interval 16-94 (SQPGVYRMYD…IKLYQPRYNV (79 aa)). Positions 204–239 (DQVLTQLISRMETASQNLEFEEAARIRDQIQAVRRV) constitute a UVR domain.

This sequence belongs to the UvrC family. As to quaternary structure, interacts with UvrB in an incision complex.

The protein resides in the cytoplasm. Functionally, the UvrABC repair system catalyzes the recognition and processing of DNA lesions. UvrC both incises the 5' and 3' sides of the lesion. The N-terminal half is responsible for the 3' incision and the C-terminal half is responsible for the 5' incision. The polypeptide is UvrABC system protein C (Escherichia coli (strain UTI89 / UPEC)).